Reading from the N-terminus, the 165-residue chain is Xanthine-guanine phosphoribosyltransferase (165 aa).

5-phospho-alpha-D-ribose 1-diphosphate is bound by residues 41 to 42 (RG) and 98 to 106 (DDLTDTGKT). Asp-99 lines the Mg(2+) pocket. Guanine-binding residues include Asp-102 and Ile-145. The xanthine site is built by Asp-102 and Ile-145. Residues 102–106 (DTGKT) and 144–145 (WI) each bind GMP.

This sequence belongs to the purine/pyrimidine phosphoribosyltransferase family. XGPT subfamily. In terms of assembly, homotetramer. It depends on Mg(2+) as a cofactor.

It is found in the cell inner membrane. The enzyme catalyses GMP + diphosphate = guanine + 5-phospho-alpha-D-ribose 1-diphosphate. It carries out the reaction XMP + diphosphate = xanthine + 5-phospho-alpha-D-ribose 1-diphosphate. It catalyses the reaction IMP + diphosphate = hypoxanthine + 5-phospho-alpha-D-ribose 1-diphosphate. It participates in purine metabolism; GMP biosynthesis via salvage pathway; GMP from guanine: step 1/1. It functions in the pathway purine metabolism; XMP biosynthesis via salvage pathway; XMP from xanthine: step 1/1. Functionally, purine salvage pathway enzyme that catalyzes the transfer of the ribosyl-5-phosphate group from 5-phospho-alpha-D-ribose 1-diphosphate (PRPP) to the N9 position of the 6-oxopurines guanine and xanthine to form the corresponding ribonucleotides GMP (guanosine 5'-monophosphate) and XMP (xanthosine 5'-monophosphate), with the release of PPi. To a lesser extent, also acts on hypoxanthine. The chain is Xanthine-guanine phosphoribosyltransferase from Rhizobium meliloti (strain 1021) (Ensifer meliloti).